A 189-amino-acid chain; its full sequence is ATP-dependent protease subunit HslV (189 aa).

Residue Thr-12 is part of the active site. Na(+) is bound by residues Ala-172, Cys-175, and Thr-178.

Belongs to the peptidase T1B family. HslV subfamily. As to quaternary structure, a double ring-shaped homohexamer of HslV is capped on each side by a ring-shaped HslU homohexamer. The assembly of the HslU/HslV complex is dependent on binding of ATP.

It is found in the cytoplasm. It carries out the reaction ATP-dependent cleavage of peptide bonds with broad specificity.. With respect to regulation, allosterically activated by HslU binding. Its function is as follows. Protease subunit of a proteasome-like degradation complex believed to be a general protein degrading machinery. This Ehrlichia ruminantium (strain Welgevonden) protein is ATP-dependent protease subunit HslV.